Consider the following 201-residue polypeptide: Holliday junction branch migration complex subunit RuvA (201 aa).

Positions 1–63 (MYDYIKGIVK…EDNISLFGFQ (63 aa)) are domain I. Positions 64-142 (STEERYLFKK…DVVASEIVYK (79 aa)) are domain II. Residues 143–153 (AAENDIVTGLS) are flexible linker. A domain III region spans residues 153-201 (SPQLEEAVLALEALGYSTRELKKVIPKMAKENDLTSDAYIKLALRLMTK).

It belongs to the RuvA family. Homotetramer. Forms an RuvA(8)-RuvB(12)-Holliday junction (HJ) complex. HJ DNA is sandwiched between 2 RuvA tetramers; dsDNA enters through RuvA and exits via RuvB. An RuvB hexamer assembles on each DNA strand where it exits the tetramer. Each RuvB hexamer is contacted by two RuvA subunits (via domain III) on 2 adjacent RuvB subunits; this complex drives branch migration. In the full resolvosome a probable DNA-RuvA(4)-RuvB(12)-RuvC(2) complex forms which resolves the HJ.

The protein localises to the cytoplasm. Its function is as follows. The RuvA-RuvB-RuvC complex processes Holliday junction (HJ) DNA during genetic recombination and DNA repair, while the RuvA-RuvB complex plays an important role in the rescue of blocked DNA replication forks via replication fork reversal (RFR). RuvA specifically binds to HJ cruciform DNA, conferring on it an open structure. The RuvB hexamer acts as an ATP-dependent pump, pulling dsDNA into and through the RuvAB complex. HJ branch migration allows RuvC to scan DNA until it finds its consensus sequence, where it cleaves and resolves the cruciform DNA. The sequence is that of Holliday junction branch migration complex subunit RuvA from Listeria innocua serovar 6a (strain ATCC BAA-680 / CLIP 11262).